The chain runs to 89 residues: MQTVLIALLRFYKLAVSPLLGSRCRFYPSCSDYAREAIQYHGAARGTYLAARRLCRCHPFSAGGIDLVPPPNSDARNAPHEAEASSHRL.

Positions 68–89 (VPPPNSDARNAPHEAEASSHRL) are disordered. The segment covering 77 to 89 (NAPHEAEASSHRL) has biased composition (basic and acidic residues).

The protein belongs to the UPF0161 family.

The protein localises to the cell inner membrane. Could be involved in insertion of integral membrane proteins into the membrane. The protein is Putative membrane protein insertion efficiency factor of Burkholderia thailandensis (strain ATCC 700388 / DSM 13276 / CCUG 48851 / CIP 106301 / E264).